Here is a 161-residue protein sequence, read N- to C-terminus: NAD(P)H-quinone oxidoreductase subunit I, chloroplastic (161 aa).

2 consecutive 4Fe-4S ferredoxin-type domains span residues 55–84 (GRIH…VDWK) and 95–124 (LNYS…MTEE). [4Fe-4S] cluster contacts are provided by C64, C67, C70, C74, C104, C107, C110, and C114.

This sequence belongs to the complex I 23 kDa subunit family. NDH is composed of at least 16 different subunits, 5 of which are encoded in the nucleus. It depends on [4Fe-4S] cluster as a cofactor.

Its subcellular location is the plastid. The protein localises to the chloroplast thylakoid membrane. The catalysed reaction is a plastoquinone + NADH + (n+1) H(+)(in) = a plastoquinol + NAD(+) + n H(+)(out). It catalyses the reaction a plastoquinone + NADPH + (n+1) H(+)(in) = a plastoquinol + NADP(+) + n H(+)(out). Functionally, NDH shuttles electrons from NAD(P)H:plastoquinone, via FMN and iron-sulfur (Fe-S) centers, to quinones in the photosynthetic chain and possibly in a chloroplast respiratory chain. The immediate electron acceptor for the enzyme in this species is believed to be plastoquinone. Couples the redox reaction to proton translocation, and thus conserves the redox energy in a proton gradient. The sequence is that of NAD(P)H-quinone oxidoreductase subunit I, chloroplastic from Lotus japonicus (Lotus corniculatus var. japonicus).